Consider the following 1033-residue polypeptide: Calcium-transporting ATPase 3, plasma membrane-type (1033 aa).

Residues 1–180 lie on the Cytoplasmic side of the membrane; sequence MHSGVNGCCP…FVWEALEDTT (180 aa). The next 2 helical transmembrane spans lie at 181–201 and 204–224; these read LIIL…TEGW and GAHD…VTGT. Residues 225–268 lie on the Cytoplasmic side of the membrane; that stretch reads SNYQQSLQFRDLDKEKRKILVQVTRNGLRQRVLIDDLLPGDAVH. Transmembrane regions (helical) follow at residues 269–289 and 362–382; these read LAVG…SVLV and IGKI…QGII. The Cytoplasmic portion of the chain corresponds to 383-405; sequence GQKYLDGLLLSWSGDDVLEILDH. The helical transmembrane segment at 406-426 threads the bilayer; that stretch reads FAVAVTIVVVAVPEGLPLAVT. D461 functions as the 4-aspartylphosphate intermediate in the catalytic mechanism. Mg(2+)-binding residues include D762 and D766. A helical membrane pass occupies residues 823–843; that stretch reads FQLTVNVVALLVNFTSACFTG. Topologically, residues 844-846 are cytoplasmic; that stretch reads DAP. 2 helical membrane-spanning segments follow: residues 847–867 and 928–948; these read LTAV…ALAL and IVLN…NEIS. Topologically, residues 949–965 are cytoplasmic; it reads SREMEDINVLRGMAGNS. Helical transmembrane passes span 966–986 and 999–1019; these read IFLG…QFLG and WLIS…IKLI. Over 1020–1033 the chain is Cytoplasmic; sequence AVEPHEKADTRRTP.

It belongs to the cation transport ATPase (P-type) (TC 3.A.3) family. Type IIB subfamily.

Its subcellular location is the membrane. The enzyme catalyses Ca(2+)(in) + ATP + H2O = Ca(2+)(out) + ADP + phosphate + H(+). Its activity is regulated as follows. Activated by calmodulin. Functionally, this magnesium-dependent enzyme catalyzes the hydrolysis of ATP coupled with the translocation of calcium from the cytosol out of the cell, into the endoplasmic reticulum, or into organelles. The polypeptide is Calcium-transporting ATPase 3, plasma membrane-type (Oryza sativa subsp. japonica (Rice)).